Consider the following 286-residue polypeptide: Undecaprenyl-diphosphatase (286 aa).

Helical transmembrane passes span 17–37 (VVLG…TAHL), 49–69 (PGVA…IGYF), 98–118 (IAIA…KLFW), 126–146 (LRSV…LALA), 159–179 (VQGL…IPGV), 204–224 (FLLG…GAFA), 232–252 (LPML…IAWL), and 261–281 (TWPF…LVLA).

This sequence belongs to the UppP family.

It localises to the cell inner membrane. It catalyses the reaction di-trans,octa-cis-undecaprenyl diphosphate + H2O = di-trans,octa-cis-undecaprenyl phosphate + phosphate + H(+). In terms of biological role, catalyzes the dephosphorylation of undecaprenyl diphosphate (UPP). Confers resistance to bacitracin. The chain is Undecaprenyl-diphosphatase from Synechococcus sp. (strain RCC307).